The sequence spans 234 residues: Phosphoglycolate phosphatase (234 aa).

The active-site Nucleophile is aspartate 15. The Mg(2+) site is built by aspartate 15, aspartate 17, and aspartate 177.

This sequence belongs to the HAD-like hydrolase superfamily. CbbY/CbbZ/Gph/YieH family. Monomer. It depends on Mg(2+) as a cofactor. Requires chloride as cofactor.

It carries out the reaction 2-phosphoglycolate + H2O = glycolate + phosphate. The protein operates within organic acid metabolism; glycolate biosynthesis; glycolate from 2-phosphoglycolate: step 1/1. Its function is as follows. Specifically catalyzes the dephosphorylation of 2-phosphoglycolate. Is involved in the dissimilation of the intracellular 2-phosphoglycolate formed during the DNA repair of 3'-phosphoglycolate ends, a major class of DNA lesions induced by oxidative stress. This chain is Phosphoglycolate phosphatase, found in Photorhabdus laumondii subsp. laumondii (strain DSM 15139 / CIP 105565 / TT01) (Photorhabdus luminescens subsp. laumondii).